The sequence spans 302 residues: Ribonuclease HII (302 aa).

The RNase H type-2 domain occupies 53-297; it reads EFEIGVDEVG…VQQAIEGTLA (245 aa). A divalent metal cation contacts are provided by D59, E60, and D163.

Belongs to the RNase HII family. Mn(2+) serves as cofactor. It depends on Mg(2+) as a cofactor.

The protein resides in the cytoplasm. It catalyses the reaction Endonucleolytic cleavage to 5'-phosphomonoester.. Endonuclease that specifically degrades the RNA of RNA-DNA hybrids. The protein is Ribonuclease HII of Psychrobacter sp. (strain PRwf-1).